A 754-amino-acid chain; its full sequence is Phosphoribosylformylglycinamidine synthase subunit PurL (754 aa).

The active site involves H52. Positions 55 and 95 each coordinate ATP. E97 lines the Mg(2+) pocket. Residues S98–H101 and R120 each bind substrate. The active-site Proton acceptor is the H99. D121 contributes to the Mg(2+) binding site. Q244 lines the substrate pocket. D272 lines the Mg(2+) pocket. E316 to Q318 lines the substrate pocket. ATP-binding residues include N504 and G541. Residue N542 participates in Mg(2+) binding. S544 contacts substrate.

This sequence belongs to the FGAMS family. Monomer. Part of the FGAM synthase complex composed of 1 PurL, 1 PurQ and 2 PurS subunits.

Its subcellular location is the cytoplasm. The catalysed reaction is N(2)-formyl-N(1)-(5-phospho-beta-D-ribosyl)glycinamide + L-glutamine + ATP + H2O = 2-formamido-N(1)-(5-O-phospho-beta-D-ribosyl)acetamidine + L-glutamate + ADP + phosphate + H(+). Its pathway is purine metabolism; IMP biosynthesis via de novo pathway; 5-amino-1-(5-phospho-D-ribosyl)imidazole from N(2)-formyl-N(1)-(5-phospho-D-ribosyl)glycinamide: step 1/2. In terms of biological role, part of the phosphoribosylformylglycinamidine synthase complex involved in the purines biosynthetic pathway. Catalyzes the ATP-dependent conversion of formylglycinamide ribonucleotide (FGAR) and glutamine to yield formylglycinamidine ribonucleotide (FGAM) and glutamate. The FGAM synthase complex is composed of three subunits. PurQ produces an ammonia molecule by converting glutamine to glutamate. PurL transfers the ammonia molecule to FGAR to form FGAM in an ATP-dependent manner. PurS interacts with PurQ and PurL and is thought to assist in the transfer of the ammonia molecule from PurQ to PurL. This chain is Phosphoribosylformylglycinamidine synthase subunit PurL, found in Salinibacter ruber (strain DSM 13855 / M31).